Here is a 287-residue protein sequence, read N- to C-terminus: Bifunctional protein FolD (287 aa).

NADP(+) contacts are provided by residues 164 to 166, S189, and I230; that span reads GSS.

The protein belongs to the tetrahydrofolate dehydrogenase/cyclohydrolase family. Homodimer.

The enzyme catalyses (6R)-5,10-methylene-5,6,7,8-tetrahydrofolate + NADP(+) = (6R)-5,10-methenyltetrahydrofolate + NADPH. It carries out the reaction (6R)-5,10-methenyltetrahydrofolate + H2O = (6R)-10-formyltetrahydrofolate + H(+). It participates in one-carbon metabolism; tetrahydrofolate interconversion. In terms of biological role, catalyzes the oxidation of 5,10-methylenetetrahydrofolate to 5,10-methenyltetrahydrofolate and then the hydrolysis of 5,10-methenyltetrahydrofolate to 10-formyltetrahydrofolate. This Aliarcobacter butzleri (strain RM4018) (Arcobacter butzleri) protein is Bifunctional protein FolD.